Consider the following 778-residue polypeptide: MGTPAERSVSEVCRCEPDPGLEGEGWGSDTHAEPSNTPIPLPVANKKKKRKKKLWINLTNCKYESVRRAARRYGIREAAEGEDWTLYWTDCSVSLDRVMDMKRYQKINHFPGMNEICRKDLLARNMNRMLKLFPKEYNIFPRTWCLPADYSDFQAYTRAKKHKTFICKPDSGCQGRGIYLTKSSKDIRPGEHMICQVYMSKPFIIDGFKFDLRIYVLVTSCDPFRVFMYDEGLVRFCTTHYTEPTVSNLEDVCMHLTNYAINKHSENFVRDEDTGSKRKLSSFKKHMEDMSYDTEKLWTDIEDAIIKTLISAHPILKHNYQTCFPNHASGSACFEILGFDVLLDRRLKPWLLEVNHSPSFTTDSRLDREVKDSLLYDTLVLINLGACDRRKITEEEKRRVKERLQQNRSREARNEEPRQSQAASMELMQKYEAKHMGGFRRIFPRDGGEKYEKYFQHSSSLFQETAASKAREECARQQLQELRLKQEQKERDKKGSRKQDLQGESAGEKVKPRKSQPPHKTSNSLPAMLELSSVREETPVSLERIEKEEAERVRELQQRETLLLNMGVVNQVRQLLQSANRLTQCINHSHEQASFPPHCRHDHKLDTLAEISWRQKNIYSTMQHQILARNRPSLPNVHSQTLQNRKPWPSLEHGLLQPVQTQAAALKHYGLEEMVASNAEEQANLIKATSAQQIPLTINGSFIWRQGSLSSSLAESRARATMLAMPPLGPGRLHRPTIFHDPNSLSIISTPAPLVPRPHLSHDLRKAPRRVLPHEHSL.

Positions 1–43 are disordered; sequence MGTPAERSVSEVCRCEPDPGLEGEGWGSDTHAEPSNTPIPLPV. The TTL domain maps to 51 to 393; that stretch reads KKKLWINLTN…LGACDRRKIT (343 aa). ATP is bound by residues K168, 174 to 175, 196 to 199, and 209 to 211; these read QG, QVYM, and KFD. Q174 is an a protein binding site. R235 is a binding site for L-glutamate. 257-258 contributes to the ATP binding site; that stretch reads TN. Positions 259 and 277 each coordinate L-glutamate. D340, E353, and N355 together coordinate Mg(2+). Position 356 (H356) interacts with a protein. The interval 365–445 is c-MTBD region; the sequence is RLDREVKDSL…MGGFRRIFPR (81 aa). Residue K371 participates in L-glutamate binding. Composition is skewed to basic and acidic residues over residues 402–418, 485–510, 533–542, and 760–778; these read ERLQQNRSREARNEEPR, KQEQKERDKKGSRKQDLQGESAGEKV, SVREETPVSL, and LSHDLRKAPRRVLPHEHSL. Disordered regions lie at residues 402–422, 485–542, and 758–778; these read ERLQQNRSREARNEEPRQSQA, KQEQ…PVSL, and PHLSHDLRKAPRRVLPHEHSL.

The protein belongs to the tubulin--tyrosine ligase family. Mg(2+) is required as a cofactor.

The protein resides in the cytoplasm. Its subcellular location is the cytoskeleton. It localises to the cilium axoneme. The protein localises to the cilium basal body. It carries out the reaction L-glutamyl-[protein] + L-glutamate + ATP = gamma-L-glutamyl-L-glutamyl-[protein] + ADP + phosphate + H(+). It catalyses the reaction (L-glutamyl)(n)-gamma-L-glutamyl-L-glutamyl-[protein] + L-glutamate + ATP = (L-glutamyl)(n+1)-gamma-L-glutamyl-L-glutamyl-[protein] + ADP + phosphate + H(+). Its function is as follows. Polyglutamylase which modifies both tubulin and non-tubulin proteins, generating alpha-linked polyglutamate side chains on the gamma-carboxyl group of specific glutamate residues of target proteins. Preferentially mediates ATP-dependent long polyglutamate chain elongation over the initiation step of the polyglutamylation reaction. Preferentially modifies the alpha-tubulin tail over a beta-tail. Mediates microtubule polyglutamylation in cilia axoneme, which is important for ciliary structural formation and motility. Polyglutamylates olfactory cilia, necessary for the regulation of ciliary structure and beating. The protein is Tubulin polyglutamylase ttll6 of Danio rerio (Zebrafish).